The following is a 257-amino-acid chain: Snake venom serine protease salmonase (257 aa).

The N-terminal stretch at 1–18 (MVLIRVLVNFLILQLSYA) is a signal peptide. The propeptide occupies 19–24 (QKSSEL). Residues 25–248 (VIGGDECNIN…YIDWIQSIIA (224 aa)) enclose the Peptidase S1 domain. 5 cysteine pairs are disulfide-bonded: cysteine 31–cysteine 162, cysteine 49–cysteine 65, cysteine 141–cysteine 209, cysteine 173–cysteine 188, and cysteine 199–cysteine 224. The active-site Charge relay system is the histidine 64. Asparagine 78 is a glycosylation site (N-linked (GlcNAc...) asparagine). Aspartate 109 (charge relay system) is an active-site residue. The Charge relay system role is filled by serine 203.

This sequence belongs to the peptidase S1 family. Snake venom subfamily. As to quaternary structure, monomer. Expressed by the venom gland.

It is found in the secreted. Its function is as follows. Snake venom serine protease that may act in the hemostasis system of the prey. The chain is Snake venom serine protease salmonase from Gloydius brevicauda (Korean slamosa snake).